Reading from the N-terminus, the 127-residue chain is Large ribosomal subunit protein bL17 (127 aa).

It belongs to the bacterial ribosomal protein bL17 family. Part of the 50S ribosomal subunit. Contacts protein L32.

In Escherichia fergusonii (strain ATCC 35469 / DSM 13698 / CCUG 18766 / IAM 14443 / JCM 21226 / LMG 7866 / NBRC 102419 / NCTC 12128 / CDC 0568-73), this protein is Large ribosomal subunit protein bL17.